We begin with the raw amino-acid sequence, 371 residues long: Deoxyhypusine synthase (371 aa).

NAD(+)-binding positions include serine 107–serine 111, threonine 133–glycine 135, glutamate 139, and aspartate 240. Glutamate 138–glutamate 139 lines the spermidine pocket. Aspartate 245 lines the spermidine pocket. Residue glycine 287 participates in NAD(+) binding. Histidine 292 is a binding site for spermidine. Residue threonine 312–alanine 313 participates in NAD(+) binding. Residues glycine 318–aspartate 320 and glutamate 327–lysine 333 contribute to the spermidine site. The active-site Nucleophile is the lysine 333. Aspartate 346–alanine 347 contributes to the NAD(+) binding site.

It belongs to the deoxyhypusine synthase family. It depends on NAD(+) as a cofactor. As to expression, expressed in shoot tips.

The catalysed reaction is [eIF5A protein]-L-lysine + spermidine = [eIF5A protein]-deoxyhypusine + propane-1,3-diamine. It participates in protein modification; eIF5A hypusination. Catalyzes the NAD-dependent oxidative cleavage of spermidine and the subsequent transfer of the butylamine moiety of spermidine to the epsilon-amino group of a specific lysine residue of the eIF-5A precursor protein to form the intermediate deoxyhypusine residue. Also able to produce homospermidine from putrescine. In Senecio vernalis (Spring groundsel), this protein is Deoxyhypusine synthase (DHS1).